Here is a 498-residue protein sequence, read N- to C-terminus: Death-associated inhibitor of apoptosis 2 (498 aa).

BIR repeat units lie at residues 12-77, 116-180, and 215-280; these read RLAT…SMVL, RLVT…PRVQ, and RLRT…QFVL. Residues Cys249, Cys252, His269, and Cys276 each coordinate Zn(2+). Residues 451 to 486 form an RING-type zinc finger; it reads CKVCLDEEVGVVFLPCGHLATCNQCAPSVANCPMCR.

The protein belongs to the IAP family. Interacts with the caspase Strica. Interacts (via BIR2 domain) with rpr and grim. Interacts (via the BIR2 and BIR3 domains) with hid. Interacts (via BIR3 domain) with Drice. Interacts with Dredd; likely to bind Dredd simultaneously with Fadd to form a trimeric complex. In terms of processing, caspase-dependent cleavage is required for suppression of Drice-mediated cell death. In terms of tissue distribution, expressed in both principal and stellar cells of the Malphigian tubules.

It localises to the nucleus. It is found in the cytoplasm. Functionally, required for activation of NF-kappaB transcription factors in the immune deficiency (Imd) signaling cascade which is essential for innate immune responses upon infection by Gram-negative bacteria. Promotes cytoplasmic cleavage of Rel and its translocation to the nucleus where it drives expression of antimicrobial peptides. Binds, polyubiquitinates and activates Dredd which is required for Rel-mediated induction of antimicrobial peptides. Anti-apoptotic protein which binds, ubiquitinates and inactivates the effector caspase Drice. Suppresses rpr and hid-dependent cell death in the eye. However, has also been shown to have little, if any, role in the regulation of the canonical caspase-dependent apoptosis pathway. Plays a role in regulating the expression of ion channels. The chain is Death-associated inhibitor of apoptosis 2 (Diap2) from Drosophila melanogaster (Fruit fly).